The sequence spans 384 residues: MKFIDEAKIEVAAGKGGNGATSFRREKFVPRGGPDGGDGGKGGSVWAEADENTNTLVEYRFVKRYQAKNGEKGHGSDRYGAGADDIVLKMPVGTLIRDLDTDEIVADLTYHGQRVCLAKGGKGGLGNIHFKSSVNRAPKQSTPGEEGETRSLQLELKVLADVGLLGMPNAGKSTLITAVSAARPKIANYPFTTLHPNLGVVRIDENHSFVMADIPGLIEGAAEGAGLGHRFLKHLSRTGLLLHVVDLAPFDETVNPAEEALAIINELRKYDEELYGKPRWLVLNKLDMLDEEEARARTAAFLEAVGWDYPEPDDRFQFDMETPRLFQISALTHQGTQELVHQINQYLAEKKRIEAEKAEAEKAAANVEIIEQQPKTDTGVFKPE.

Positions 1-159 constitute an Obg domain; it reads MKFIDEAKIE…RSLQLELKVL (159 aa). 2 disordered regions span residues 20–46 and 129–149; these read ATSFRREKFVPRGGPDGGDGGKGGSVW and HFKSSVNRAPKQSTPGEEGET. Residues 33–43 are compositionally biased toward gly residues; it reads GPDGGDGGKGG. The segment covering 130–143 has biased composition (polar residues); that stretch reads FKSSVNRAPKQSTP. The OBG-type G domain maps to 160–348; that stretch reads ADVGLLGMPN…LVHQINQYLA (189 aa). GTP contacts are provided by residues 166–173, 191–195, 213–216, 284–287, and 329–331; these read GMPNAGKS, FTTLH, DIPG, NKLD, and SAL. Mg(2+)-binding residues include Ser173 and Thr193.

Belongs to the TRAFAC class OBG-HflX-like GTPase superfamily. OBG GTPase family. Monomer. It depends on Mg(2+) as a cofactor.

It localises to the cytoplasm. In terms of biological role, an essential GTPase which binds GTP, GDP and possibly (p)ppGpp with moderate affinity, with high nucleotide exchange rates and a fairly low GTP hydrolysis rate; the half-life of the GTP-bound state is about 50 minutes. Plays a role in control of the cell cycle, stress response, ribosome biogenesis and in those bacteria that undergo differentiation, in morphogenesis control. This is GTPase Obg from Neisseria gonorrhoeae (strain ATCC 700825 / FA 1090).